Reading from the N-terminus, the 408-residue chain is L-lactate oxidase (408 aa).

An FMN hydroxy acid dehydrogenase domain is found at 14–370 (NEAIKMVNVD…KHADIRQINY (357 aa)). Y40 is a binding site for pyruvate. Residues 93 to 95 (PIA), S122, and Q144 contribute to the FMN site. Pyruvate is bound at residue Y146. T172 lines the FMN pocket. R181 contributes to the pyruvate binding site. FMN is bound by residues K241 and S263. Pyruvate-binding residues include H265 and R268. H265 (proton acceptor) is an active-site residue. FMN-binding positions include 296-300 (DSGVR) and R320.

This sequence belongs to the FMN-dependent alpha-hydroxy acid dehydrogenase family. Homotetramer. It depends on FMN as a cofactor.

It carries out the reaction a (2S)-2-hydroxycarboxylate + O2 = a 2-oxocarboxylate + H2O2. It catalyses the reaction (S)-lactate + O2 = pyruvate + H2O2. The enzyme catalyses 2-hydroxyoctanoate + O2 = 2-oxooctanoate + H2O2. The catalysed reaction is glycolate + O2 = glyoxylate + H2O2. It carries out the reaction mandelate + O2 = phenylglyoxylate + H2O2. It catalyses the reaction 2-hydroxyoctadecanoate + O2 = 2-oxooctadecanoate + H2O2. Oxidase that catalyzes the oxidation of a broad range of 2-hydroxyacids in vitro, such as (S)-lactate, 2-hydroxyoctanoate, and to a lesser extent glycolate, mandelate and 2-hydroxyoctadecanoate, to the corresponding 2-oxoacids, with a reduction of O2 to H2O2. May be involved in the utilization of L-lactate as an energy source for growth. This is L-lactate oxidase from Lactobacillus jensenii.